Here is a 198-residue protein sequence, read N- to C-terminus: Probable chemoreceptor glutamine deamidase CheD (198 aa).

The protein belongs to the CheD family.

The enzyme catalyses L-glutaminyl-[protein] + H2O = L-glutamyl-[protein] + NH4(+). In terms of biological role, probably deamidates glutamine residues to glutamate on methyl-accepting chemotaxis receptors (MCPs), playing an important role in chemotaxis. The sequence is that of Probable chemoreceptor glutamine deamidase CheD from Stenotrophomonas maltophilia (strain R551-3).